Consider the following 343-residue polypeptide: Small ribosomal subunit biogenesis GTPase RsgA (343 aa).

The CP-type G domain maps to 116-275 (RGQLKPVAAN…LIDSPGIREF (160 aa)). GTP contacts are provided by residues 163–166 (NKAD) and 217–225 (GQSGVGKSS). Zn(2+)-binding residues include Cys-299, Cys-304, His-306, and Cys-312.

The protein belongs to the TRAFAC class YlqF/YawG GTPase family. RsgA subfamily. As to quaternary structure, monomer. Associates with 30S ribosomal subunit, binds 16S rRNA. The cofactor is Zn(2+).

The protein localises to the cytoplasm. In terms of biological role, one of several proteins that assist in the late maturation steps of the functional core of the 30S ribosomal subunit. Helps release RbfA from mature subunits. May play a role in the assembly of ribosomal proteins into the subunit. Circularly permuted GTPase that catalyzes slow GTP hydrolysis, GTPase activity is stimulated by the 30S ribosomal subunit. In Azotobacter vinelandii (strain DJ / ATCC BAA-1303), this protein is Small ribosomal subunit biogenesis GTPase RsgA.